Consider the following 327-residue polypeptide: Mitochondrial carnitine carrier (327 aa).

Residues 1–11 are compositionally biased toward low complexity; the sequence is MSSDTSLSESS. The interval 1 to 29 is disordered; it reads MSSDTSLSESSLLKEESGSLTKSRPPIKS. 6 consecutive transmembrane segments (helical) span residues 33-49, 107-123, 141-162, 196-212, 244-260, and 293-313; these read RENI…GVCA, LGVT…YDVG, MGQM…TAPT, GSLA…ALYF, LAGG…VFPI, and FFPG…ATFL. Solcar repeat units follow at residues 33 to 126, 139 to 221, and 237 to 321; these read RENI…GKKL, LTMG…SKNY, and VNIL…THSL.

This sequence belongs to the mitochondrial carrier (TC 2.A.29) family.

It localises to the mitochondrion inner membrane. Functionally, transports carnitine, acetylcarnitine, propionylcarnitine and to a much lower extent medium- and long-chain acylcarnitines. The sequence is that of Mitochondrial carnitine carrier (CRC1) from Saccharomyces cerevisiae (strain ATCC 204508 / S288c) (Baker's yeast).